Here is a 184-residue protein sequence, read N- to C-terminus: Peptide deformylase (184 aa).

Fe cation is bound by residues C111 and H154. Residue E155 is part of the active site. Residue H158 coordinates Fe cation.

Belongs to the polypeptide deformylase family. Fe(2+) is required as a cofactor.

The enzyme catalyses N-terminal N-formyl-L-methionyl-[peptide] + H2O = N-terminal L-methionyl-[peptide] + formate. Removes the formyl group from the N-terminal Met of newly synthesized proteins. Requires at least a dipeptide for an efficient rate of reaction. N-terminal L-methionine is a prerequisite for activity but the enzyme has broad specificity at other positions. This Pediococcus pentosaceus (strain ATCC 25745 / CCUG 21536 / LMG 10740 / 183-1w) protein is Peptide deformylase.